The chain runs to 337 residues: MGKIKIGINGFGRIGRLVARVALQSDDVELVAVNDPFITTEYMTYMFKYDTVHGHWKHSDIKLKDDKTLLFGEKPVTVFGVRNPEEIPWGEAGADYVVESTGVFTDKDKAAAHLKGGAKKVVISAPSKDAPMFVVGVNEDKYTSDVNIVSNASCTTNCLAPLAKVINDNFGIIEGLMTTVHAITATQKTVDGPSSKDWRGGRAASFNIIPSSTGAAKAVGKVLPELNGKLTGMSFRVPTVDVSVVDLTVRTEKAASYDDIKKAIKAASEGKLKGIMGYVEEDLVSTDFVGDSRSSIFDAKAGIALNDHFVKLVSWYDNEWGYSNRVVDLIRHMAKTQ.

NAD(+) is bound by residues 13-14 (RI), Asp35, and Arg82. Residues 153-155 (SCT), Thr184, 213-214 (TG), and Arg236 contribute to the D-glyceraldehyde 3-phosphate site. Cys154 (nucleophile) is an active-site residue. Residue Asn318 participates in NAD(+) binding.

The protein belongs to the glyceraldehyde-3-phosphate dehydrogenase family. As to quaternary structure, homotetramer.

It is found in the cytoplasm. It catalyses the reaction D-glyceraldehyde 3-phosphate + phosphate + NAD(+) = (2R)-3-phospho-glyceroyl phosphate + NADH + H(+). It participates in carbohydrate degradation; glycolysis; pyruvate from D-glyceraldehyde 3-phosphate: step 1/5. Key enzyme in glycolysis that catalyzes the first step of the pathway by converting D-glyceraldehyde 3-phosphate (G3P) into 3-phospho-D-glyceroyl phosphate. Essential for the maintenance of cellular ATP levels and carbohydrate metabolism. The sequence is that of Glyceraldehyde-3-phosphate dehydrogenase 1, cytosolic (GAPC) from Hordeum vulgare (Barley).